Consider the following 223-residue polypeptide: DNA mismatch repair protein MutH (223 aa).

The protein belongs to the MutH family.

Its subcellular location is the cytoplasm. Its function is as follows. Sequence-specific endonuclease that cleaves unmethylated GATC sequences. It is involved in DNA mismatch repair. This is DNA mismatch repair protein MutH from Shewanella baltica (strain OS195).